The chain runs to 91 residues: Cytochrome c-554(547) (91 aa).

Heme c is bound by residues C15, C18, H19, and M64.

As to quaternary structure, monomer. Post-translationally, binds 1 heme c group covalently per subunit.

The chain is Cytochrome c-554(547) from Halothiobacillus neapolitanus (Thiobacillus neapolitanus).